The sequence spans 534 residues: Probable protein kinase UbiB (534 aa).

The chain crosses the membrane as a helical span at residues 23 to 43; it reads DLLFALPLPWFLLAVRYVLPW. The region spanning 125–492 is the Protein kinase domain; sequence RFDVDPLASA…WKKRKDDWFL (368 aa). Residues 131–139 and lysine 153 contribute to the ATP site; that span reads LASASVAQV. Catalysis depends on aspartate 288, which acts as the Proton acceptor. A run of 2 helical transmembrane segments spans residues 490–510 and 512–532; these read WFLR…AIGG and LNQL…YLIV.

It belongs to the ABC1 family. UbiB subfamily.

Its subcellular location is the cell inner membrane. It participates in cofactor biosynthesis; ubiquinone biosynthesis [regulation]. Is probably a protein kinase regulator of UbiI activity which is involved in aerobic coenzyme Q (ubiquinone) biosynthesis. This Pseudomonas fluorescens (strain SBW25) protein is Probable protein kinase UbiB.